Reading from the N-terminus, the 103-residue chain is Cell division protein FtsB (103 aa).

Topologically, residues 1–3 (MGK) are cytoplasmic. A helical membrane pass occupies residues 4–21 (LTLLLLAILVWLQYSLWF). The Periplasmic segment spans residues 22-103 (GKNGIHDYSR…RAQTAGQNNR (82 aa)). Residues 31–71 (RVNDDVAAQQATNAKLKARNDQLFAEIDDLNGGQEALEERA) are a coiled coil.

Belongs to the FtsB family. As to quaternary structure, part of a complex composed of FtsB, FtsL and FtsQ.

It is found in the cell inner membrane. Essential cell division protein. May link together the upstream cell division proteins, which are predominantly cytoplasmic, with the downstream cell division proteins, which are predominantly periplasmic. The chain is Cell division protein FtsB from Escherichia fergusonii (strain ATCC 35469 / DSM 13698 / CCUG 18766 / IAM 14443 / JCM 21226 / LMG 7866 / NBRC 102419 / NCTC 12128 / CDC 0568-73).